A 262-amino-acid chain; its full sequence is MNNRPIRLLTSGRAGLGAGALITAVVLLIALGAVWTLVAFADGCPDAEVTFARGTGEPPGIGRVGQAFVDSLRQQTGMEIGVYPVNYAASRLQLHGGDGANDAISHIKSMASSCPNTKLVLGGYSQGATVIDIVAGVPLGSISFGSPLPAAYADNVAAVAVFGNPSNRAGGSLSSLSPLFGSKAIDLCNPTDPICHVGPGNEFSGHIDDYIPTYTTQAASFVVQRLRAGSVPHLPGSVPQLPGSVLQMPGTAAPAPESLHGR.

The N-terminal stretch at 1–41 is a signal peptide; that stretch reads MNNRPIRLLTSGRAGLGAGALITAVVLLIALGAVWTLVAFA. Cys-44 and Cys-114 form a disulfide bridge. Ser-125 acts as the Nucleophile in catalysis. Residues Cys-188 and Cys-195 are joined by a disulfide bond. Asp-192 is an active-site residue. His-206 (proton donor/acceptor) is an active-site residue. A disordered region spans residues 241–262; that stretch reads LPGSVLQMPGTAAPAPESLHGR.

Belongs to the cutinase family.

The protein resides in the secreted. This chain is Probable carboxylesterase Culp3 (cut3), found in Mycobacterium tuberculosis (strain CDC 1551 / Oshkosh).